The chain runs to 159 residues: ATP synthase subunit b 2 (159 aa).

Residues 1-21 (MDATFWAFIALVIFVAIVVYM) traverse the membrane as a helical segment.

Belongs to the ATPase B chain family. F-type ATPases have 2 components, F(1) - the catalytic core - and F(0) - the membrane proton channel. F(1) has five subunits: alpha(3), beta(3), gamma(1), delta(1), epsilon(1). F(0) has three main subunits: a(1), b(2) and c(10-14). The alpha and beta chains form an alternating ring which encloses part of the gamma chain. F(1) is attached to F(0) by a central stalk formed by the gamma and epsilon chains, while a peripheral stalk is formed by the delta and b chains.

The protein localises to the cell inner membrane. Functionally, f(1)F(0) ATP synthase produces ATP from ADP in the presence of a proton or sodium gradient. F-type ATPases consist of two structural domains, F(1) containing the extramembraneous catalytic core and F(0) containing the membrane proton channel, linked together by a central stalk and a peripheral stalk. During catalysis, ATP synthesis in the catalytic domain of F(1) is coupled via a rotary mechanism of the central stalk subunits to proton translocation. Its function is as follows. Component of the F(0) channel, it forms part of the peripheral stalk, linking F(1) to F(0). The protein is ATP synthase subunit b 2 of Brucella ovis (strain ATCC 25840 / 63/290 / NCTC 10512).